The following is a 227-amino-acid chain: Cytochrome c oxidase subunit 2 (227 aa).

At Met1 to Ser14 the chain is on the mitochondrial intermembrane side. Residues Pro15–Met45 traverse the membrane as a helical segment. Residues Leu46–Gln59 lie on the Mitochondrial matrix side of the membrane. The chain crosses the membrane as a helical span at residues Glu60–Met87. Over Asp88 to Ile227 the chain is Mitochondrial intermembrane. Cu cation-binding residues include His161, Cys196, Glu198, Cys200, His204, and Met207. Residue Glu198 participates in Mg(2+) binding. Residue Tyr218 is modified to Phosphotyrosine.

It belongs to the cytochrome c oxidase subunit 2 family. In terms of assembly, component of the cytochrome c oxidase (complex IV, CIV), a multisubunit enzyme composed of 14 subunits. The complex is composed of a catalytic core of 3 subunits MT-CO1, MT-CO2 and MT-CO3, encoded in the mitochondrial DNA, and 11 supernumerary subunits COX4I, COX5A, COX5B, COX6A, COX6B, COX6C, COX7A, COX7B, COX7C, COX8 and NDUFA4, which are encoded in the nuclear genome. The complex exists as a monomer or a dimer and forms supercomplexes (SCs) in the inner mitochondrial membrane with NADH-ubiquinone oxidoreductase (complex I, CI) and ubiquinol-cytochrome c oxidoreductase (cytochrome b-c1 complex, complex III, CIII), resulting in different assemblies (supercomplex SCI(1)III(2)IV(1) and megacomplex MCI(2)III(2)IV(2)). Found in a complex with TMEM177, COA6, COX18, COX20, SCO1 and SCO2. Interacts with TMEM177 in a COX20-dependent manner. Interacts with COX20. Interacts with COX16. Requires Cu cation as cofactor.

The protein resides in the mitochondrion inner membrane. It carries out the reaction 4 Fe(II)-[cytochrome c] + O2 + 8 H(+)(in) = 4 Fe(III)-[cytochrome c] + 2 H2O + 4 H(+)(out). Its function is as follows. Component of the cytochrome c oxidase, the last enzyme in the mitochondrial electron transport chain which drives oxidative phosphorylation. The respiratory chain contains 3 multisubunit complexes succinate dehydrogenase (complex II, CII), ubiquinol-cytochrome c oxidoreductase (cytochrome b-c1 complex, complex III, CIII) and cytochrome c oxidase (complex IV, CIV), that cooperate to transfer electrons derived from NADH and succinate to molecular oxygen, creating an electrochemical gradient over the inner membrane that drives transmembrane transport and the ATP synthase. Cytochrome c oxidase is the component of the respiratory chain that catalyzes the reduction of oxygen to water. Electrons originating from reduced cytochrome c in the intermembrane space (IMS) are transferred via the dinuclear copper A center (CU(A)) of subunit 2 and heme A of subunit 1 to the active site in subunit 1, a binuclear center (BNC) formed by heme A3 and copper B (CU(B)). The BNC reduces molecular oxygen to 2 water molecules using 4 electrons from cytochrome c in the IMS and 4 protons from the mitochondrial matrix. The polypeptide is Cytochrome c oxidase subunit 2 (MT-CO2) (Lemniscomys barbarus (Barbary striped grass mouse)).